Here is a 176-residue protein sequence, read N- to C-terminus: Large ribosomal subunit protein uL10 (176 aa).

It belongs to the universal ribosomal protein uL10 family. In terms of assembly, part of the ribosomal stalk of the 50S ribosomal subunit. The N-terminus interacts with L11 and the large rRNA to form the base of the stalk. The C-terminus forms an elongated spine to which L12 dimers bind in a sequential fashion forming a multimeric L10(L12)X complex.

Functionally, forms part of the ribosomal stalk, playing a central role in the interaction of the ribosome with GTP-bound translation factors. The protein is Large ribosomal subunit protein uL10 of Natranaerobius thermophilus (strain ATCC BAA-1301 / DSM 18059 / JW/NM-WN-LF).